A 214-amino-acid polypeptide reads, in one-letter code: Methyltransferase HEMK2 (214 aa).

T29, E51, G53, D77, D103, L104, and N122 together coordinate S-adenosyl-L-methionine. N122 provides a ligand contact to a protein.

Belongs to the eukaryotic/archaeal PrmC-related family. As to quaternary structure, heterodimer; heterodimerization with TRMT112 is required for S-adenosyl-L-methionine-binding. Post-translationally, ubiquitinated, leading to its degradation by the proteasome. As to expression, highly expressed in undifferentiated embryonic stem cells (at protein level). Also expressed in testis and brain, weakly expressed in differentiated embryonic stem cells and kidney. Not expressed in muscle, heart, placenta, pancreas, lung and stomach.

The protein localises to the nucleus. The enzyme catalyses L-lysyl-[histone] + S-adenosyl-L-methionine = N(6)-methyl-L-lysyl-[histone] + S-adenosyl-L-homocysteine + H(+). It carries out the reaction L-glutaminyl-[protein] + S-adenosyl-L-methionine = N(5)-methyl-L-glutaminyl-[protein] + S-adenosyl-L-homocysteine + H(+). It catalyses the reaction methylarsonous acid + S-adenosyl-L-methionine = dimethylarsinate + S-adenosyl-L-homocysteine + 2 H(+). Functionally, methyltransferase that can methylate proteins and, to a lower extent, arsenic. Catalytic subunit of a heterodimer with TRMT112, which monomethylates 'Lys-12' of histone H4 (H4K12me1), a modification present at the promoters of numerous genes encoding cell cycle regulators. Catalytic subunit of a heterodimer with TRMT112, which catalyzes N5-methylation of Glu residue of proteins with a Gly-Gln-Xaa-Xaa-Xaa-Arg motif. Methylates ETF1 on 'Gln-185'; ETF1 needs to be complexed to ERF3 in its GTP-bound form to be efficiently methylated. May also play a role in the modulation of arsenic-induced toxicity by mediating the conversion of monomethylarsonous acid (3+) into the less toxic dimethylarsonic acid. It however only plays a limited role in arsenic metabolism compared with AS3MT. In Mus musculus (Mouse), this protein is Methyltransferase HEMK2.